A 360-amino-acid polypeptide reads, in one-letter code: Ferrochelatase (360 aa).

Residues His-210 and Glu-291 each contribute to the Fe cation site.

The protein belongs to the ferrochelatase family.

The protein localises to the cytoplasm. It catalyses the reaction heme b + 2 H(+) = protoporphyrin IX + Fe(2+). The protein operates within porphyrin-containing compound metabolism; protoheme biosynthesis; protoheme from protoporphyrin-IX: step 1/1. In terms of biological role, catalyzes the ferrous insertion into protoporphyrin IX. The chain is Ferrochelatase from Pseudoalteromonas atlantica (strain T6c / ATCC BAA-1087).